The following is a 366-amino-acid chain: Transaldolase (366 aa).

Lysine 140 acts as the Schiff-base intermediate with substrate in catalysis.

The protein belongs to the transaldolase family. Type 2 subfamily.

The protein localises to the cytoplasm. The catalysed reaction is D-sedoheptulose 7-phosphate + D-glyceraldehyde 3-phosphate = D-erythrose 4-phosphate + beta-D-fructose 6-phosphate. The protein operates within carbohydrate degradation; pentose phosphate pathway; D-glyceraldehyde 3-phosphate and beta-D-fructose 6-phosphate from D-ribose 5-phosphate and D-xylulose 5-phosphate (non-oxidative stage): step 2/3. In terms of biological role, transaldolase is important for the balance of metabolites in the pentose-phosphate pathway. In Saccharopolyspora erythraea (strain ATCC 11635 / DSM 40517 / JCM 4748 / NBRC 13426 / NCIMB 8594 / NRRL 2338), this protein is Transaldolase.